Reading from the N-terminus, the 376-residue chain is UDP-N-acetylglucosamine--N-acetylmuramyl-(pentapeptide) pyrophosphoryl-undecaprenol N-acetylglucosamine transferase (376 aa).

UDP-N-acetyl-alpha-D-glucosamine is bound by residues 11 to 13 (TGG), Asn117, Arg160, Ser208, and Gln310.

It belongs to the glycosyltransferase 28 family. MurG subfamily.

The protein localises to the cell inner membrane. It catalyses the reaction di-trans,octa-cis-undecaprenyl diphospho-N-acetyl-alpha-D-muramoyl-L-alanyl-D-glutamyl-meso-2,6-diaminopimeloyl-D-alanyl-D-alanine + UDP-N-acetyl-alpha-D-glucosamine = di-trans,octa-cis-undecaprenyl diphospho-[N-acetyl-alpha-D-glucosaminyl-(1-&gt;4)]-N-acetyl-alpha-D-muramoyl-L-alanyl-D-glutamyl-meso-2,6-diaminopimeloyl-D-alanyl-D-alanine + UDP + H(+). It functions in the pathway cell wall biogenesis; peptidoglycan biosynthesis. Functionally, cell wall formation. Catalyzes the transfer of a GlcNAc subunit on undecaprenyl-pyrophosphoryl-MurNAc-pentapeptide (lipid intermediate I) to form undecaprenyl-pyrophosphoryl-MurNAc-(pentapeptide)GlcNAc (lipid intermediate II). This chain is UDP-N-acetylglucosamine--N-acetylmuramyl-(pentapeptide) pyrophosphoryl-undecaprenol N-acetylglucosamine transferase, found in Rickettsia rickettsii (strain Iowa).